Reading from the N-terminus, the 125-residue chain is Protein ApaG (125 aa).

Positions 1-125 constitute an ApaG domain; the sequence is MIEQPRICVQ…FRLAIPALIH (125 aa).

This chain is Protein ApaG, found in Yersinia pestis bv. Antiqua (strain Antiqua).